The following is a 390-amino-acid chain: METFLFTSESVNEGHPDKLCDQVSDAILDACLEQDPESKVACETCTKTSMVMVFGEITTKATVDYEKIVRDTCRGIGFTSADVGLDADHCKVLVNIEQQSPDIAQGVHGHLTKKPEEIGAGDQGHMFGYATDETPELMPLTHVLATKLGAKLTEVRKNKTCPWLRPDGKTQVTVEYRNDNGAMIPLRVHTILISTQHDETVTNDQIAQDLKEHVIKPVVPAEYLDENTIFHLNPSGRFVIGGPHGDAGLTGRKIIIDTYGGWGAHGGGAFSGKDPTKVDRSGAYIVRQAAKSVVASGLARRCIVQVSYAIGVAEPLSVFVDTYKTGTIPGKDVLTLIKENFDFRPGMMSINLDLLRGGNFRYQKTAAYGHFGRDDPDFTWETVKVLNPQA.

Residue glutamate 9 coordinates Mg(2+). An ATP-binding site is contributed by histidine 15. Glutamate 43 contacts K(+). Positions 56 and 99 each coordinate L-methionine. ATP contacts are provided by residues 167-169, 235-238, aspartate 246, 252-253, alanine 269, lysine 273, and lysine 277; these read DGK, SGRF, and RK. Aspartate 246 contributes to the L-methionine binding site. Lysine 277 contacts L-methionine.

This sequence belongs to the AdoMet synthase family. Homotetramer. The cofactor is Mn(2+). It depends on Mg(2+) as a cofactor. Co(2+) serves as cofactor. Requires K(+) as cofactor.

It localises to the cytoplasm. It carries out the reaction L-methionine + ATP + H2O = S-adenosyl-L-methionine + phosphate + diphosphate. It participates in amino-acid biosynthesis; S-adenosyl-L-methionine biosynthesis; S-adenosyl-L-methionine from L-methionine: step 1/1. Its function is as follows. Catalyzes the formation of S-adenosylmethionine from methionine and ATP. The reaction comprises two steps that are both catalyzed by the same enzyme: formation of S-adenosylmethionine (AdoMet) and triphosphate, and subsequent hydrolysis of the triphosphate. The chain is S-adenosylmethionine synthase 2 (SAM2) from Petunia hybrida (Petunia).